Consider the following 503-residue polypeptide: Na(+)-translocating NADH-quinone reductase subunit B (503 aa).

5 helical membrane-spanning segments follow: residues 55–75 (MMLV…NSGL), 94–114 (ISGF…VPIL), 120–140 (IFIP…VLFA), 161–181 (TLPP…GIVV), and 186–206 (FGGT…FLFF). FMN phosphoryl threonine is present on T248. The next 5 helical transmembrane spans lie at 361–381 (TSTF…IASW), 386–406 (AFGI…VLIV), 417–437 (FFIP…LVFM), 452–472 (WIYG…NPAY), and 475–495 (GVML…YFAV).

Belongs to the NqrB/RnfD family. In terms of assembly, composed of six subunits; NqrA, NqrB, NqrC, NqrD, NqrE and NqrF. The cofactor is FMN.

The protein localises to the cell inner membrane. It catalyses the reaction a ubiquinone + n Na(+)(in) + NADH + H(+) = a ubiquinol + n Na(+)(out) + NAD(+). NQR complex catalyzes the reduction of ubiquinone-1 to ubiquinol by two successive reactions, coupled with the transport of Na(+) ions from the cytoplasm to the periplasm. NqrA to NqrE are probably involved in the second step, the conversion of ubisemiquinone to ubiquinol. The chain is Na(+)-translocating NADH-quinone reductase subunit B from Chlamydia pneumoniae (Chlamydophila pneumoniae).